Reading from the N-terminus, the 250-residue chain is 5-oxoprolinase subunit A (250 aa).

It belongs to the LamB/PxpA family. Forms a complex composed of PxpA, PxpB and PxpC.

The enzyme catalyses 5-oxo-L-proline + ATP + 2 H2O = L-glutamate + ADP + phosphate + H(+). Catalyzes the cleavage of 5-oxoproline to form L-glutamate coupled to the hydrolysis of ATP to ADP and inorganic phosphate. The protein is 5-oxoprolinase subunit A of Streptomyces coelicolor (strain ATCC BAA-471 / A3(2) / M145).